A 389-amino-acid polypeptide reads, in one-letter code: RHOMBOID-like protein 1 (389 aa).

Transmembrane regions (helical) follow at residues 56–76, 136–156, 163–183, 191–211, 221–241, 244–264, and 295–315; these read PWLVPAIVVANIALFAISMFI, IWLHAGVFHVLANMLSLIFIG, FGFVRIGLLYMISGFGGSLLS, ISVGASGALFGLLGAMLSELL, FAALLTLIFIIAINLAVGILP, DNFAHLGGFTSGFLLGFVFLI, and VLWITSLVLLIAGYTAGLVVL. The active-site Nucleophile is the serine 196. The active-site Charge relay system is histidine 248.

The protein belongs to the peptidase S54 family. Expressed in roots, seedlings, leaves, stems and flowers.

The protein localises to the golgi apparatus membrane. The enzyme catalyses Cleaves type-1 transmembrane domains using a catalytic dyad composed of serine and histidine that are contributed by different transmembrane domains.. Its function is as follows. Probable rhomboid-type serine protease that catalyzes intramembrane proteolysis. Unable to cleave the Drosophila protein Spitz. This is RHOMBOID-like protein 1 from Arabidopsis thaliana (Mouse-ear cress).